Here is a 439-residue protein sequence, read N- to C-terminus: N5-carboxyaminoimidazole ribonucleotide synthase (439 aa).

Residues K113, K160, 197–200, E205, and 283–284 contribute to the ATP site; these read EERV and NE. The ATP-grasp domain occupies 117–313; sequence RRRLAALGAA…QFEQHLRAVL (197 aa).

Belongs to the PurK/PurT family. As to quaternary structure, homodimer.

The enzyme catalyses 5-amino-1-(5-phospho-beta-D-ribosyl)imidazole + hydrogencarbonate + ATP = 5-carboxyamino-1-(5-phospho-D-ribosyl)imidazole + ADP + phosphate + 2 H(+). It functions in the pathway purine metabolism; IMP biosynthesis via de novo pathway; 5-amino-1-(5-phospho-D-ribosyl)imidazole-4-carboxylate from 5-amino-1-(5-phospho-D-ribosyl)imidazole (N5-CAIR route): step 1/2. Functionally, catalyzes the ATP-dependent conversion of 5-aminoimidazole ribonucleotide (AIR) and HCO(3)(-) to N5-carboxyaminoimidazole ribonucleotide (N5-CAIR). In Mycobacterium leprae (strain TN), this protein is N5-carboxyaminoimidazole ribonucleotide synthase.